Here is a 394-residue protein sequence, read N- to C-terminus: GPI transamidase component GAB1 (394 aa).

Over 1–135 the chain is Cytoplasmic; the sequence is MDSTALKVAL…TLLSCISRSS (135 aa). The helical transmembrane segment at 136–156 threads the bilayer; that stretch reads IIFTNFAISSSLYCILAEGNV. Residues 157 to 160 lie on the Lumenal side of the membrane; sequence LLSS. Residues 161-181 form a helical membrane-spanning segment; sequence VMISISGYLSVYPILLLIPLL. Residues 182–190 are Cytoplasmic-facing; it reads GMLKSWRQR. A helical transmembrane segment spans residues 191–211; that stretch reads ILSAIVSILSLLILLLFSYSI. At 212-224 the chain is on the lumenal side; sequence LGSQSWSFLTQVY. Residues 225–245 traverse the membrane as a helical segment; sequence GSIITFEKVFPNLGLWWYFFI. Residues 235–255 form a may be involved in recognition of long-chain fatty acids in GPI region; that stretch reads PNLGLWWYFFIEMFDTFIPFF. The Cytoplasmic portion of the chain corresponds to 246-250; the sequence is EMFDT. Residues 251–271 form a helical membrane-spanning segment; that stretch reads FIPFFKAVFNIFIAVFITPFT. At 272-297 the chain is on the lumenal side; that stretch reads LRYHKQPFYAFILCIGWIVLTKPYPS. A helical membrane pass occupies residues 298–318; sequence LGDAGFFFSFLPFFTPLFGYL. The Cytoplasmic portion of the chain corresponds to 319-324; the sequence is RYPIIS. A helical transmembrane segment spans residues 325 to 345; sequence ALLFLHAIVLAPIFYHLWVVL. The Lumenal portion of the chain corresponds to 346–351; it reads GSGNSN. The helical transmembrane segment at 352–372 threads the bilayer; that stretch reads FFYAISLVYALAIASILVDLN. Over 373-394 the chain is Cytoplasmic; that stretch reads WAMLRIEYDNGIPNFKLKVTQI.

Belongs to the PIGU family. Forms a complex with GPI16, GPI17, GPI8 and GAA1.

The protein resides in the endoplasmic reticulum membrane. It participates in glycolipid biosynthesis; glycosylphosphatidylinositol-anchor biosynthesis. In terms of biological role, component of the GPI transamidase complex. May be involved in the recognition of either the GPI attachment signal or the lipid portion of GPI. The chain is GPI transamidase component GAB1 (GAB1) from Saccharomyces cerevisiae (strain ATCC 204508 / S288c) (Baker's yeast).